A 156-amino-acid polypeptide reads, in one-letter code: Translationally controlled tumor protein 2 (156 aa).

Residues 1–156 (MLVYQDILTG…LAYGLKEIKC (156 aa)) enclose the TCTP domain.

The protein belongs to the TCTP family. Expressed in stems, cauline leaves, minor veins of rosette leaves, roots, lateral root primordia, vascular tissues of petioles and inflorescences, base of siliques, papillae and ovules. Not detected in root meristems, anthers or seeds. Expressed in stomata, trichomes and root cortex.

It is found in the nucleus. The protein resides in the cytoplasm. Functionally, regulates proliferation. Induces whole plant regeneration when expressed in heterologous systems. Involved in root growth and lateral root development, with a probable role in cell reprogramming. The long-distance transport of TCTP RNA and/or protein in plants may have an important role in regulation of growth and development. The chain is Translationally controlled tumor protein 2 from Arabidopsis thaliana (Mouse-ear cress).